The sequence spans 221 residues: ATP phosphoribosyltransferase (221 aa).

Belongs to the ATP phosphoribosyltransferase family. Short subfamily. As to quaternary structure, heteromultimer composed of HisG and HisZ subunits.

It localises to the cytoplasm. The enzyme catalyses 1-(5-phospho-beta-D-ribosyl)-ATP + diphosphate = 5-phospho-alpha-D-ribose 1-diphosphate + ATP. It participates in amino-acid biosynthesis; L-histidine biosynthesis; L-histidine from 5-phospho-alpha-D-ribose 1-diphosphate: step 1/9. Functionally, catalyzes the condensation of ATP and 5-phosphoribose 1-diphosphate to form N'-(5'-phosphoribosyl)-ATP (PR-ATP). Has a crucial role in the pathway because the rate of histidine biosynthesis seems to be controlled primarily by regulation of HisG enzymatic activity. The polypeptide is ATP phosphoribosyltransferase (Anaeromyxobacter dehalogenans (strain 2CP-1 / ATCC BAA-258)).